A 254-amino-acid polypeptide reads, in one-letter code: MSINIGEISIPDLPIFFSMFLTIYLIAYFIVFRNWKPQIRPEASSCLISIFHGSPAVFLATRAVFSSSERSFASANTAAQNTVLDFSVAYFLTDLFHYIVFNPNDVLFIGHHVATLFVFLTCRFLVFHGACAILGLLILAEVTSACQNAWTLAGARKNDPESRLAVKVYDLLSPPFYAFYSIVRGVLGPLFFGKMVAFYARGGAHGVIPNWLWISWAIVVGIAITVSILWIWNLWIELFSERKANKIRVDKKIR.

The next 6 membrane-spanning stretches (helical) occupy residues 12 to 32 (DLPIFFSMFLTIYLIAYFIVF), 45 to 65 (SCLISIFHGSPAVFLATRAVF), 82 to 101 (TVLDFSVAYFLTDLFHYIVF), 124 to 144 (FLVFHGACAILGLLILAEVTS), 172 to 192 (LSPPFYAFYSIVRGVLGPLFF), and 211 to 231 (WLWISWAIVVGIAITVSILWI). The TLC domain maps to 38-248 (QIRPEASSCL…FSERKANKIR (211 aa)).

The protein resides in the membrane. This Arabidopsis thaliana (Mouse-ear cress) protein is TLC domain-containing protein At5g14285.